A 296-amino-acid chain; its full sequence is Transposase for insertion sequence element IS629 (296 aa).

The 161-residue stretch at 125–285 folds into the Integrase catalytic domain; the sequence is VAERPDQLWV…TPPAEAEKAY (161 aa).

In terms of biological role, involved in the transposition of the insertion sequence. In Shigella sonnei, this protein is Transposase for insertion sequence element IS629.